We begin with the raw amino-acid sequence, 33 residues long: Photosystem II reaction center protein Psb30 (33 aa).

A helical transmembrane segment spans residues 5–25 (VIAQLIALALIVGSGPLVIAL).

This sequence belongs to the Psb30/Ycf12 family. As to quaternary structure, PSII is composed of 1 copy each of membrane proteins PsbA, PsbB, PsbC, PsbD, PsbE, PsbF, PsbH, PsbI, PsbJ, PsbK, PsbL, PsbM, PsbT, PsbX, PsbY, PsbZ, Psb30/Ycf12, peripheral proteins of the oxygen-evolving complex and a large number of cofactors. It forms dimeric complexes.

It localises to the plastid. It is found in the chloroplast thylakoid membrane. Its function is as follows. A core subunit of photosystem II (PSII), probably helps stabilize the reaction center. The polypeptide is Photosystem II reaction center protein Psb30 (Physcomitrium patens (Spreading-leaved earth moss)).